Consider the following 141-residue polypeptide: Large ribosomal subunit protein bL17 (141 aa).

The protein belongs to the bacterial ribosomal protein bL17 family. Part of the 50S ribosomal subunit. Contacts protein L32.

The chain is Large ribosomal subunit protein bL17 from Chlamydia trachomatis serovar D (strain ATCC VR-885 / DSM 19411 / UW-3/Cx).